The primary structure comprises 247 residues: Carboxy-S-adenosyl-L-methionine synthase (247 aa).

Residues Y40, 65–67 (GAS), 90–91 (DN), 122–123 (DI), N137, and R204 contribute to the S-adenosyl-L-methionine site.

This sequence belongs to the class I-like SAM-binding methyltransferase superfamily. Cx-SAM synthase family. In terms of assembly, homodimer.

It carries out the reaction prephenate + S-adenosyl-L-methionine = carboxy-S-adenosyl-L-methionine + 3-phenylpyruvate + H2O. In terms of biological role, catalyzes the conversion of S-adenosyl-L-methionine (SAM) to carboxy-S-adenosyl-L-methionine (Cx-SAM). The chain is Carboxy-S-adenosyl-L-methionine synthase from Pseudomonas putida (strain GB-1).